Reading from the N-terminus, the 223-residue chain is UPF0441 protein YgiB (223 aa).

A compositionally biased stretch (low complexity) spans 178–195 (TVPKTAMAPKPATTTTVT). The segment at 178-223 (TVPKTAMAPKPATTTTVTRGGFGESIAKQSTMQRSATGTSSRSMGG) is disordered. Residues 204-223 (AKQSTMQRSATGTSSRSMGG) are compositionally biased toward polar residues.

The protein belongs to the UPF0441 family.

The chain is UPF0441 protein YgiB from Shigella boydii serotype 4 (strain Sb227).